The following is a 274-amino-acid chain: tRNA (guanine-N(1)-)-methyltransferase (274 aa).

S-adenosyl-L-methionine-binding positions include Gly116 and 140–145; that span reads LGDYVL.

This sequence belongs to the RNA methyltransferase TrmD family. In terms of assembly, homodimer.

Its subcellular location is the cytoplasm. It carries out the reaction guanosine(37) in tRNA + S-adenosyl-L-methionine = N(1)-methylguanosine(37) in tRNA + S-adenosyl-L-homocysteine + H(+). Specifically methylates guanosine-37 in various tRNAs. This is tRNA (guanine-N(1)-)-methyltransferase from Arthrobacter sp. (strain FB24).